The following is a 490-amino-acid chain: Cyclin-T1-3 (490 aa).

Disordered stretches follow at residues 275–391 and 414–490; these read RVAP…GDVA and AAED…RLRS. Composition is skewed to polar residues over residues 282–298 and 352–365; these read QGND…NQRA and TANS…SSTM. Composition is skewed to basic and acidic residues over residues 367–391 and 457–490; these read AMKK…GDVA and QEYR…RLRS.

The protein belongs to the cyclin family. Cyclin T subfamily.

The chain is Cyclin-T1-3 (CYCT1-3) from Oryza sativa subsp. japonica (Rice).